Here is a 620-residue protein sequence, read N- to C-terminus: MSFDIAKYPTLALVDSTQELRLLPKESLPKLCDELRRYLLDSVSRSSGHFASGLGTVELTVALHYVYNTPFDQLIWDVGHQAYPHKILTGRRDKIGTIRQKGGLHPFPWRGESEYDVLSVGHSSTSISAGIGIAVAAEKEGKNRRTVCVIGDGAITAGMAFEAMNHAGDIRPDMLVVLNDNEMSISENVGALNNHLAQLLSGKLYSSLREGGKKVFSGVPPIKELLKRTEEHIKGMVVPGTLFEELGFNYIGPVDGHDVLGLITTLKNMRDLKGPQFLHIMTKKGRGYEPAEKDPITFHAVPKFDPSSGCLPKSSGGLPSYSKIFGDWLCETAAKDNKLMAITPAMREGSGMVEFSRKFPDRYFDVAIAEQHAVTFAAGLAIGGYKPIVAIYSTFLQRAYDQVLHDVAIQKLPVLFAIDRAGIVGADGQTHQGAFDLSYLRCIPEMVIMTPSDENECRQMLYTGYHYNDGPSAVRYPRGNAVGVELTPLEKLPIGKGIVKRRGEKLAILNFGTLMPEAAKVAESLNATLVDMRFVKPLDEALILEIAASHEALVTVEENAIMGGAGSGVNEVLMAHRKPVPVLNIGLPDFFIPQGTQEEMRAELGLDAAGMEAKIKAWLA.

Thiamine diphosphate is bound by residues His-80 and 121–123; that span reads GHS. Asp-152 contacts Mg(2+). Residues 153-154, Asn-181, Tyr-288, and Glu-370 each bind thiamine diphosphate; that span reads GA. Position 181 (Asn-181) interacts with Mg(2+).

It belongs to the transketolase family. DXPS subfamily. In terms of assembly, homodimer. Mg(2+) serves as cofactor. Requires thiamine diphosphate as cofactor.

The catalysed reaction is D-glyceraldehyde 3-phosphate + pyruvate + H(+) = 1-deoxy-D-xylulose 5-phosphate + CO2. The protein operates within metabolic intermediate biosynthesis; 1-deoxy-D-xylulose 5-phosphate biosynthesis; 1-deoxy-D-xylulose 5-phosphate from D-glyceraldehyde 3-phosphate and pyruvate: step 1/1. In terms of biological role, catalyzes the acyloin condensation reaction between C atoms 2 and 3 of pyruvate and glyceraldehyde 3-phosphate to yield 1-deoxy-D-xylulose-5-phosphate (DXP). The protein is 1-deoxy-D-xylulose-5-phosphate synthase of Escherichia coli (strain SMS-3-5 / SECEC).